Consider the following 327-residue polypeptide: Undecaprenyl-phosphate 4-deoxy-4-formamido-L-arabinose transferase (327 aa).

Helical transmembrane passes span 233–253 (ILSL…LLLI) and 268–288 (VFTL…GMGL).

It belongs to the glycosyltransferase 2 family.

It is found in the cell inner membrane. It carries out the reaction UDP-4-deoxy-4-formamido-beta-L-arabinose + di-trans,octa-cis-undecaprenyl phosphate = 4-deoxy-4-formamido-alpha-L-arabinopyranosyl di-trans,octa-cis-undecaprenyl phosphate + UDP. It participates in glycolipid biosynthesis; 4-amino-4-deoxy-alpha-L-arabinose undecaprenyl phosphate biosynthesis; 4-amino-4-deoxy-alpha-L-arabinose undecaprenyl phosphate from UDP-4-deoxy-4-formamido-beta-L-arabinose and undecaprenyl phosphate: step 1/2. The protein operates within bacterial outer membrane biogenesis; lipopolysaccharide biosynthesis. In terms of biological role, catalyzes the transfer of 4-deoxy-4-formamido-L-arabinose from UDP to undecaprenyl phosphate. The modified arabinose is attached to lipid A and is required for resistance to polymyxin and cationic antimicrobial peptides. The sequence is that of Undecaprenyl-phosphate 4-deoxy-4-formamido-L-arabinose transferase from Pectobacterium atrosepticum (strain SCRI 1043 / ATCC BAA-672) (Erwinia carotovora subsp. atroseptica).